Consider the following 110-residue polypeptide: Large ribosomal subunit protein uL22 (110 aa).

This sequence belongs to the universal ribosomal protein uL22 family. In terms of assembly, part of the 50S ribosomal subunit.

Functionally, this protein binds specifically to 23S rRNA; its binding is stimulated by other ribosomal proteins, e.g. L4, L17, and L20. It is important during the early stages of 50S assembly. It makes multiple contacts with different domains of the 23S rRNA in the assembled 50S subunit and ribosome. Its function is as follows. The globular domain of the protein is located near the polypeptide exit tunnel on the outside of the subunit, while an extended beta-hairpin is found that lines the wall of the exit tunnel in the center of the 70S ribosome. This Dichelobacter nodosus (strain VCS1703A) protein is Large ribosomal subunit protein uL22.